The chain runs to 131 residues: Fluoride-specific ion channel FluC 2 (131 aa).

4 helical membrane passes run 5 to 25 (FGVA…SLLV), 39 to 59 (LATL…TTLA), 70 to 90 (LAVG…AWES), and 104 to 124 (LYVL…RALA). Na(+) contacts are provided by Gly-78 and Thr-81.

It belongs to the fluoride channel Fluc/FEX (TC 1.A.43) family.

The protein localises to the cell membrane. The enzyme catalyses fluoride(in) = fluoride(out). Na(+) is not transported, but it plays an essential structural role and its presence is essential for fluoride channel function. Functionally, fluoride-specific ion channel. Important for reducing fluoride concentration in the cell, thus reducing its toxicity. The protein is Fluoride-specific ion channel FluC 2 of Deinococcus geothermalis (strain DSM 11300 / CIP 105573 / AG-3a).